The following is a 195-amino-acid chain: Shikimate kinase (195 aa).

ATP is bound at residue 33–38 (GAGKTT). Residue T37 participates in Mg(2+) binding. Residues D55, R79, and G101 each coordinate substrate. R139 is a binding site for ATP. Residue R158 coordinates substrate. R175 is a binding site for ATP.

Belongs to the shikimate kinase family. In terms of assembly, monomer. It depends on Mg(2+) as a cofactor.

The protein resides in the cytoplasm. It carries out the reaction shikimate + ATP = 3-phosphoshikimate + ADP + H(+). The protein operates within metabolic intermediate biosynthesis; chorismate biosynthesis; chorismate from D-erythrose 4-phosphate and phosphoenolpyruvate: step 5/7. Catalyzes the specific phosphorylation of the 3-hydroxyl group of shikimic acid using ATP as a cosubstrate. This chain is Shikimate kinase, found in Nitrosospira multiformis (strain ATCC 25196 / NCIMB 11849 / C 71).